The following is a 299-amino-acid chain: Probable lipid kinase YegS (299 aa).

The 132-residue stretch at 2-133 (AEFPASLLIL…IDMAQVNKQT (132 aa)) folds into the DAGKc domain. ATP is bound by residues Thr-40, 66-72 (GDGTINE), and Thr-95. Leu-215, Asp-218, and Leu-220 together coordinate Mg(2+). Residue Glu-271 is the Proton acceptor of the active site.

Belongs to the diacylglycerol/lipid kinase family. YegS lipid kinase subfamily. The cofactor is Mg(2+). Requires Ca(2+) as cofactor.

The protein resides in the cytoplasm. Its function is as follows. Probably phosphorylates lipids; the in vivo substrate is unknown. The protein is Probable lipid kinase YegS of Escherichia coli O17:K52:H18 (strain UMN026 / ExPEC).